Reading from the N-terminus, the 799-residue chain is Signal transducer and activator of transcription 5A (799 aa).

Y90 is subject to Phosphotyrosine. Residue S128 is modified to Phosphoserine. Residues 589–686 form the SH2 domain; sequence WNDGAILGFV…EVFSKYYTPV (98 aa). Phosphotyrosine is present on Y682. At Y699 the chain carries Phosphotyrosine; by JAK2. The tract at residues 778–799 is disordered; sequence DSLDPRLSPPAGLFASTRGSLS. A Phosphoserine modification is found at S785.

Belongs to the transcription factor STAT family. Forms a homodimer or a heterodimer with a related family member. Binds NR3C1. Interacts with NCOA1 and SOCS7. Interacts with ERBB4. Interacts with EBF4. Interacts with CD69. ISGylated. In terms of processing, tyrosine phosphorylated in response to KITLG/SCF, IL2, IL3, IL7, IL15, CSF2/GMCSF, GH1, PRL, EPO and THPO. Activated KIT promotes phosphorylation on tyrosine residues and subsequent translocation to the nucleus. Tyrosine phosphorylated in response to constitutively activated FGFR1, FGFR2, FGFR3 and FGFR4. Tyrosine phosphorylation is required for DNA-binding activity and dimerization. Serine phosphorylation is also required for maximal transcriptional activity. Tyrosine phosphorylated in response to signaling via activated FLT3; wild-type FLT3 results in much weaker phosphorylation than constitutively activated mutant FLT3. Alternatively, can be phosphorylated by JAK2 at Tyr-699.

It is found in the cytoplasm. The protein localises to the nucleus. Carries out a dual function: signal transduction and activation of transcription. Mediates cellular responses to the cytokine KITLG/SCF and other growth factors. May mediate cellular responses to activated FGFR1, FGFR2, FGFR3 and FGFR4. Binds to the GAS element and activates PRL-induced transcription. Regulates the expression of milk proteins during lactation. The chain is Signal transducer and activator of transcription 5A (STAT5A) from Sus scrofa (Pig).